Here is a 119-residue protein sequence, read N- to C-terminus: DNA-binding protein TubR (119 aa).

As to quaternary structure, homodimer. Binds to TubZ filaments via the C-terminus of TubZ. DNA is not required for binding to TubZ.

Functionally, a DNA-binding protein that is part of the type III plasmid partition system used to ensure correct segregation of the pBc10987 plasmid. Binds TubZ filaments but does not influence the GTPase activity of TubZ with or without DNA. Cooperatively binds to multiple regions in tubC (centromere-like site) upstream of its own gene with consensus sequence N(T/A)ATTNC(C/G)GNAAT(A/T)N; probably forms an extended DNA-protein filament. Binds sites in its own promoter region and presumably represses its expression; its effect on RNA expression has not been shown. Does not specifically bind to the putative origin of replication on pBc10987. The chain is DNA-binding protein TubR from Bacillus cereus (strain ATCC 10987 / NRS 248).